The following is a 148-amino-acid chain: Large ribosomal subunit protein uL22c (148 aa).

It belongs to the universal ribosomal protein uL22 family. Part of the 50S ribosomal subunit.

The protein localises to the plastid. It localises to the chloroplast. In terms of biological role, this protein binds specifically to 23S rRNA. Functionally, the globular domain of the protein is located near the polypeptide exit tunnel on the outside of the subunit, while an extended beta-hairpin is found that lines the wall of the exit tunnel in the center of the 70S ribosome. This chain is Large ribosomal subunit protein uL22c (rpl22), found in Zea mays (Maize).